Consider the following 453-residue polypeptide: Zinc finger protein Pegasus (453 aa).

C2H2-type zinc fingers lie at residues 101–123 (LKCRYCNYASKGTARLIEHIRIH), 129–151 (HRCHLCPFASAYERHLEAHMRSH), and 157–180 (YKCELCSFRCSDRSNLSHHRRRKH). Residues 279-293 (GQLSSLPPDTQNPAS) are compositionally biased toward polar residues. The disordered stretch occupies residues 279-375 (GQLSSLPPDT…QPSTPAPALP (97 aa)). Residues 315–332 (CSSAVSTSVAQSSSPASP) show a composition bias toward low complexity. Positions 356 to 368 (RTSTPSISNSQPS) are enriched in polar residues. 2 consecutive C2H2-type zinc fingers follow at residues 383–405 (HHCQHCDMYFADNILYTIHMGCH) and 411–438 (FQCNICGCKCKNKYDFACHFARGACCQH).

This sequence belongs to the Ikaros C2H2-type zinc-finger protein family. Probably self-associates.

It localises to the nucleus. Transcriptional repressor that binds the core 5'GNNTGTNG-3' DNA consensus sequence. The sequence is that of Zinc finger protein Pegasus (ikzf5) from Xenopus laevis (African clawed frog).